Reading from the N-terminus, the 263-residue chain is Phosphatidylglycerol--prolipoprotein diacylglyceryl transferase (263 aa).

4 helical membrane passes run 15 to 35 (ISIHWYAICIVSGLLLAVYLA), 52 to 72 (FILLAFPIAIVGARLYYVIFQ), 83 to 103 (IFAIWNGGIAIYGGLIAGAAV), and 112 to 132 (AIAVLDFLDIAAPGVMIAQSI). R134 contributes to the a 1,2-diacyl-sn-glycero-3-phospho-(1'-sn-glycerol) binding site. The next 3 membrane-spanning stretches (helical) occupy residues 170–190 (VPTFLYESLWNLVGFSIILGL), 200–220 (GDVTSFYLIWYGLGRFVIEGM), and 227–247 (FVGLRVSQWVSISIIILGAVL).

The protein belongs to the Lgt family.

It localises to the cell membrane. The catalysed reaction is L-cysteinyl-[prolipoprotein] + a 1,2-diacyl-sn-glycero-3-phospho-(1'-sn-glycerol) = an S-1,2-diacyl-sn-glyceryl-L-cysteinyl-[prolipoprotein] + sn-glycerol 1-phosphate + H(+). The protein operates within protein modification; lipoprotein biosynthesis (diacylglyceryl transfer). Functionally, catalyzes the transfer of the diacylglyceryl group from phosphatidylglycerol to the sulfhydryl group of the N-terminal cysteine of a prolipoprotein, the first step in the formation of mature lipoproteins. In Streptococcus thermophilus (strain ATCC BAA-491 / LMD-9), this protein is Phosphatidylglycerol--prolipoprotein diacylglyceryl transferase.